The following is a 348-amino-acid chain: Probable dual-specificity RNA methyltransferase RlmN (348 aa).

Glutamate 89 serves as the catalytic Proton acceptor. A Radical SAM core domain is found at 95–328; sequence HKNRNTVCVS…VTLRISYGSR (234 aa). The cysteines at positions 102 and 333 are disulfide-linked. The [4Fe-4S] cluster site is built by cysteine 109, cysteine 113, and cysteine 116. Residues 159–160, serine 191, 214–216, and asparagine 290 contribute to the S-adenosyl-L-methionine site; these read GE and SLH. The active-site S-methylcysteine intermediate is the cysteine 333.

This sequence belongs to the radical SAM superfamily. RlmN family. The cofactor is [4Fe-4S] cluster.

The protein resides in the cytoplasm. It catalyses the reaction adenosine(2503) in 23S rRNA + 2 reduced [2Fe-2S]-[ferredoxin] + 2 S-adenosyl-L-methionine = 2-methyladenosine(2503) in 23S rRNA + 5'-deoxyadenosine + L-methionine + 2 oxidized [2Fe-2S]-[ferredoxin] + S-adenosyl-L-homocysteine. It carries out the reaction adenosine(37) in tRNA + 2 reduced [2Fe-2S]-[ferredoxin] + 2 S-adenosyl-L-methionine = 2-methyladenosine(37) in tRNA + 5'-deoxyadenosine + L-methionine + 2 oxidized [2Fe-2S]-[ferredoxin] + S-adenosyl-L-homocysteine. Functionally, specifically methylates position 2 of adenine 2503 in 23S rRNA and position 2 of adenine 37 in tRNAs. The polypeptide is Probable dual-specificity RNA methyltransferase RlmN (Dictyoglomus thermophilum (strain ATCC 35947 / DSM 3960 / H-6-12)).